The primary structure comprises 393 residues: NAD(P)H-quinone oxidoreductase subunit H, chloroplastic (393 aa).

The protein belongs to the complex I 49 kDa subunit family. In terms of assembly, NDH is composed of at least 16 different subunits, 5 of which are encoded in the nucleus.

The protein localises to the plastid. Its subcellular location is the chloroplast thylakoid membrane. The enzyme catalyses a plastoquinone + NADH + (n+1) H(+)(in) = a plastoquinol + NAD(+) + n H(+)(out). It catalyses the reaction a plastoquinone + NADPH + (n+1) H(+)(in) = a plastoquinol + NADP(+) + n H(+)(out). Functionally, NDH shuttles electrons from NAD(P)H:plastoquinone, via FMN and iron-sulfur (Fe-S) centers, to quinones in the photosynthetic chain and possibly in a chloroplast respiratory chain. The immediate electron acceptor for the enzyme in this species is believed to be plastoquinone. Couples the redox reaction to proton translocation, and thus conserves the redox energy in a proton gradient. The polypeptide is NAD(P)H-quinone oxidoreductase subunit H, chloroplastic (Manihot esculenta (Cassava)).